The following is a 543-amino-acid chain: ABC transport system permease protein p69 (543 aa).

The next 12 helical transmembrane spans lie at 18–38 (IWYW…YSWI), 78–98 (AFFV…FSYW), 115–135 (ITIV…SNLF), 141–161 (ATLT…TTFF), 211–231 (TLLS…PLSI), 237–257 (LVLI…VVVF), 288–308 (IIFI…LVTI), 354–374 (ISLI…SCNL), 379–399 (FSIS…ILLF), 413–433 (IILV…SINF), 482–502 (LILF…NFFE), and 510–530 (GSVT…FLSV). In terms of domain architecture, ABC transmembrane type-1 spans 74–256 (LAQTAFFVTG…TFLIFIEVVV (183 aa)).

Belongs to the binding-protein-dependent transport system permease family.

The protein localises to the cell membrane. Its function is as follows. Probably part of a high-affinity transport system. This chain is ABC transport system permease protein p69 (p69), found in Mycoplasma genitalium (strain ATCC 33530 / DSM 19775 / NCTC 10195 / G37) (Mycoplasmoides genitalium).